The chain runs to 346 residues: Growth hormone-inducible transmembrane protein (346 aa).

Residues 1-45 (MLAARLVCLRTLPSRVFQPTFITKASPLVKNSITKNQWLVTPSRE) constitute a mitochondrion transit peptide. Residues 46-83 (YATKTRIRTHRGKTGQELKEAALEPSMEKIFKIDQMGR) are Mitochondrial matrix-facing. Residues 84–104 (WFVAGGAAVGLGALCYYGLGM) traverse the membrane as a helical segment. At 105–126 (SNEIGAIEKAVIWPQYVKDRIH) the chain is on the mitochondrial intermembrane side. The helical transmembrane segment at 127-147 (STYMYLAGSIGLTALSALAVA) threads the bilayer. Residues 148 to 160 (RTPALMNFMMTGS) are Mitochondrial matrix-facing. Residues 161–181 (WVTIGATFAAMIGAGMLVHSI) traverse the membrane as a helical segment. Residues 182 to 191 (SYEQSPGPKH) are Mitochondrial intermembrane-facing. The chain crosses the membrane as a helical span at residues 192 to 212 (LAWMLHSGVMGAVVAPLTILG). The Mitochondrial matrix segment spans residues 213-214 (GP). Residues 215-235 (LLLRAAWYTAGIVGGLSTVAM) form a helical membrane-spanning segment. The Mitochondrial intermembrane segment spans residues 236-245 (CAPSEKFLNM). The chain crosses the membrane as a helical span at residues 246 to 266 (GAPLGVGLGLVFASSLGSMFL). Residues 267–272 (PPTSVA) lie on the Mitochondrial matrix side of the membrane. Residues 273–293 (GATLYSVAMYGGLVLFSMFLL) form a helical membrane-spanning segment. At 294-346 (YDTQKVIKRAEITPMYGAQKYDPINSMLTIYMDTLNIFMRVATMLATGSNRKK) the chain is on the mitochondrial intermembrane side.

Belongs to the BI1 family. Interacts with LETM1 and AFG3L2. Undergoes AFG3L2-mediated proteolytic degradation, upon hyperpolarization of mitochondria.

The protein localises to the mitochondrion inner membrane. The catalysed reaction is Ca(2+)(in) + 2 H(+)(out) = Ca(2+)(out) + 2 H(+)(in). The enzyme catalyses K(+)(in) + H(+)(out) = K(+)(out) + H(+)(in). Functionally, plays an important role in maintenance of mitochondrial morphology and in mediating either calcium or potassium/proton antiport. Mediates proton-dependent calcium efflux from mitochondrion. Also functions as an electroneutral mitochondrial proton/potassium exchanger. Required for the mitochondrial tubular network and cristae organization. Involved in apoptotic release of cytochrome c. Inhibits AFG3L2 proteolytic activity, stimulating respiration and stabilizing respiratory enzymes in actively respiring mitochondria. However, when mitochondria become hyperpolarized, GHITM loses its inhibitory activity toward AFG3L2 and the now active AFG3L2 turns first on GHITM and, if hyperpolarization persists, on other proteins of the mitochondria, leading to a broad remodeling of the mitochondrial proteome. The protein is Growth hormone-inducible transmembrane protein (Ghitm) of Mus musculus (Mouse).